The sequence spans 88 residues: Platelet factor 4 (88 aa).

T7 carries an O-linked (GalNAc...) threonine glycan. 2 disulfide bridges follow: C25/C51 and C27/C67. Phosphoserine is present on S41. 76–82 (KKILKKL) provides a ligand contact to heparin.

Belongs to the intercrine alpha (chemokine CxC) family. Homotetramer. Interacts with TNFAIP6 (via Link domain). Interacts with CCR1. Interacts with CXCR3. Interacts with THBD; this interaction enhances generation of activated protein C. Post-translationally, O-linked glycan consists of Gal-GalNAc disaccharide which is modified with sialic acid residues (microheterogeneity).

The protein localises to the secreted. Functionally, chemokine released during platelet aggregation that plays a role in different biological processes including hematopoiesis, cell proliferation, differentiation, and activation. Acts via different functional receptors including CCR1, CXCR3A or CXCR3B. Upon interaction with CXCR3A receptor, induces activated T-lymphocytes migration mediated via downstream Ras/extracellular signal-regulated kinase (ERK) signaling. Neutralizes the anticoagulant effect of heparin by binding more strongly to heparin than to the chondroitin-4-sulfate chains of the carrier molecule. Plays a role in the inhibition of hematopoiesis and in the maintenance of hematopoietic stem cell (HSC) quiescence. Chemotactic for neutrophils and monocytes via CCR1. Inhibits endothelial cell proliferation. In cooperation with toll-like receptor 8/TLR8, induces chromatin remodeling and activates inflammatory gene expression via the TBK1-IRF5 axis. In addition, induces myofibroblast differentiation and collagen synthesis in different precursor cells, including endothelial cells, by stimulating endothelial-to-mesenchymal transition. Interacts with thrombomodulin/THBD to enhance the activation of protein C and thus potentiates its anticoagulant activity. The protein is Platelet factor 4 (PF4) of Bos taurus (Bovine).